The chain runs to 591 residues: V-type ATP synthase alpha chain (591 aa).

233–240 contributes to the ATP binding site; it reads GPFGAGKT.

This sequence belongs to the ATPase alpha/beta chains family.

It catalyses the reaction ATP + H2O + 4 H(+)(in) = ADP + phosphate + 5 H(+)(out). Produces ATP from ADP in the presence of a proton gradient across the membrane. The V-type alpha chain is a catalytic subunit. The protein is V-type ATP synthase alpha chain of Streptococcus pyogenes serotype M1.